The sequence spans 773 residues: MGKKRAPQKGKTVTKPQEIIVDESKLNWKPVDIPDTLDDFGGFYGLEEIDGVDVKVVDGKVTFVTKKDSKVLKDSNKEKVGDDQESVENESGSDSESELLEFKNLDDIKEGELSAASYSSSDEDEQGNIESSKLTDPSEDVDEDVDEDVLKENVFNKDINIDDISPVNLPEWTNLAPLSMTILQSLQNLNFLRPTEIQKKSIPVIMQGVDVMGKASTGSGKTLAYGIPIVEKLISNFSQKNKKPISLIFTPTRELAHQVTDHLKKICEPVLAKSQYSILSLTGGLSIQKQQRLLKYDNSGQIVIATPGRFLELLEKDNTLIKRFSKVNTLILDEADRLLQDGHFDEFEKIIKHLLVERRKNRENSEGSSKIWQTLIFSATFSIDLFDKLSSSRQVKDRRFKNNEDELNAVIQHLMSKIHFNSKPVIIDTNPESKVSSQIKESLIECPPLERDLYCYYFLTMFPGTTLIFCNAIDSVKKLTVYLNNLGIPAFQIHSSMTQKNRLKSLERFKQQSAKQKTINHSNPDSVQLSTVLIASDVAARGLDIPGVQHVIHYHLPRSTDIYIHRSGRTARAGSEGVSAMICSPQESMGPLRKLRKTLATKNSVSTDLNSRSTNRKPIKWQNTVPLLPIETDILSQLRERSRLAGELADHEIASNSLRKDDNWLKKAADELGIDVDSDEDDISKSNSDTFLLKNKNKKMQKTINKDKVKAMRATLNELLSVPIRKDRRQKYLTGGLVNLADNLVKKRGHNSIIGHEKTNALETLKKKKKRNN.

Residues 73 to 82 (KDSNKEKVGD) show a composition bias toward basic and acidic residues. Disordered regions lie at residues 73 to 99 (KDSNKEKVGDDQESVENESGSDSESEL) and 114 to 144 (SAASYSSSDEDEQGNIESSKLTDPSEDVDED). Acidic residues predominate over residues 83 to 99 (DQESVENESGSDSESEL). Thr-135 carries the phosphothreonine modification. The residue at position 138 (Ser-138) is a Phosphoserine. Positions 171 to 199 (EWTNLAPLSMTILQSLQNLNFLRPTEIQK) match the Q motif motif. The Helicase ATP-binding domain occupies 202–399 (IPVIMQGVDV…SSSRQVKDRR (198 aa)). An ATP-binding site is contributed by 215–222 (ASTGSGKT). The DEAD box signature appears at 333 to 336 (DEAD). A Helicase C-terminal domain is found at 452–615 (DLYCYYFLTM…STDLNSRSTN (164 aa)). Ser-678 is subject to Phosphoserine.

The protein belongs to the DEAD box helicase family. DDX24/MAK5 subfamily.

Its subcellular location is the nucleus. The protein localises to the nucleolus. It carries out the reaction ATP + H2O = ADP + phosphate + H(+). In terms of biological role, ATP-binding RNA helicase involved in the biogenesis of 60S ribosomal subunits and is required for the normal formation of 25S and 5.8S rRNAs. Required for the maintenance of dsRNA killer plasmid. The sequence is that of ATP-dependent RNA helicase MAK5 (MAK5) from Saccharomyces cerevisiae (strain ATCC 204508 / S288c) (Baker's yeast).